The following is a 106-amino-acid chain: Large ribosomal subunit protein uL24 (106 aa).

It belongs to the universal ribosomal protein uL24 family. In terms of assembly, part of the 50S ribosomal subunit.

One of two assembly initiator proteins, it binds directly to the 5'-end of the 23S rRNA, where it nucleates assembly of the 50S subunit. In terms of biological role, one of the proteins that surrounds the polypeptide exit tunnel on the outside of the subunit. The sequence is that of Large ribosomal subunit protein uL24 from Paracidovorax citrulli (strain AAC00-1) (Acidovorax citrulli).